The primary structure comprises 307 residues: UDP-3-O-acyl-N-acetylglucosamine deacetylase (307 aa).

Residues His78, His241, and Asp245 each coordinate Zn(2+). His268 serves as the catalytic Proton donor.

The protein belongs to the LpxC family. The cofactor is Zn(2+).

The catalysed reaction is a UDP-3-O-[(3R)-3-hydroxyacyl]-N-acetyl-alpha-D-glucosamine + H2O = a UDP-3-O-[(3R)-3-hydroxyacyl]-alpha-D-glucosamine + acetate. The protein operates within glycolipid biosynthesis; lipid IV(A) biosynthesis; lipid IV(A) from (3R)-3-hydroxytetradecanoyl-[acyl-carrier-protein] and UDP-N-acetyl-alpha-D-glucosamine: step 2/6. Its function is as follows. Catalyzes the hydrolysis of UDP-3-O-myristoyl-N-acetylglucosamine to form UDP-3-O-myristoylglucosamine and acetate, the committed step in lipid A biosynthesis. This chain is UDP-3-O-acyl-N-acetylglucosamine deacetylase, found in Bordetella bronchiseptica (strain ATCC BAA-588 / NCTC 13252 / RB50) (Alcaligenes bronchisepticus).